The sequence spans 152 residues: Large-conductance mechanosensitive channel (152 aa).

The next 2 membrane-spanning stretches (helical) occupy residues 14-34 and 84-104; these read VIDL…VKSL and VGQF…VFLL.

This sequence belongs to the MscL family. As to quaternary structure, homopentamer.

It is found in the cell inner membrane. Channel that opens in response to stretch forces in the membrane lipid bilayer. May participate in the regulation of osmotic pressure changes within the cell. This Laribacter hongkongensis (strain HLHK9) protein is Large-conductance mechanosensitive channel.